The primary structure comprises 111 residues: Glutaredoxin-C2 (111 aa).

In terms of domain architecture, Glutaredoxin spans 3–103 (MQKAKEIVNS…PLLTEAGAIA (101 aa)). Cys23 and Cys26 are joined by a disulfide.

The protein belongs to the glutaredoxin family. CPYC subfamily.

Its subcellular location is the cytoplasm. Has a glutathione-disulfide oxidoreductase activity in the presence of NADPH and glutathione reductase. Reduces low molecular weight disulfides and proteins. This Arabidopsis thaliana (Mouse-ear cress) protein is Glutaredoxin-C2 (GRXC2).